A 150-amino-acid chain; its full sequence is Large ribosomal subunit protein bL9 (150 aa).

It belongs to the bacterial ribosomal protein bL9 family.

Its function is as follows. Binds to the 23S rRNA. This Shewanella baltica (strain OS223) protein is Large ribosomal subunit protein bL9.